Here is a 450-residue protein sequence, read N- to C-terminus: Exodeoxyribonuclease 7 large subunit (450 aa).

It belongs to the XseA family. In terms of assembly, heterooligomer composed of large and small subunits.

It is found in the cytoplasm. It carries out the reaction Exonucleolytic cleavage in either 5'- to 3'- or 3'- to 5'-direction to yield nucleoside 5'-phosphates.. Bidirectionally degrades single-stranded DNA into large acid-insoluble oligonucleotides, which are then degraded further into small acid-soluble oligonucleotides. The sequence is that of Exodeoxyribonuclease 7 large subunit from Listeria monocytogenes serotype 4b (strain CLIP80459).